We begin with the raw amino-acid sequence, 156 residues long: SPbeta prophage-derived uncharacterized protein YosH (156 aa).

This is SPbeta prophage-derived uncharacterized protein YosH (yosH) from Bacillus subtilis (strain 168).